Reading from the N-terminus, the 277-residue chain is Large ribosomal subunit protein uL2 (277 aa).

The tract at residues 226 to 277 (MNPVDHPHGGGEGRSPIGMPSPVTPWGKPTLGYKTRKPNKKSDRLIVSRRKK) is disordered.

The protein belongs to the universal ribosomal protein uL2 family. Part of the 50S ribosomal subunit. Forms a bridge to the 30S subunit in the 70S ribosome.

In terms of biological role, one of the primary rRNA binding proteins. Required for association of the 30S and 50S subunits to form the 70S ribosome, for tRNA binding and peptide bond formation. It has been suggested to have peptidyltransferase activity; this is somewhat controversial. Makes several contacts with the 16S rRNA in the 70S ribosome. This Symbiobacterium thermophilum (strain DSM 24528 / JCM 14929 / IAM 14863 / T) protein is Large ribosomal subunit protein uL2.